Reading from the N-terminus, the 227-residue chain is 2,3-bisphosphoglycerate-dependent phosphoglycerate mutase (227 aa).

Substrate contacts are provided by residues 7–14 (RHGLSEWN), 20–21 (TG), Arg-59, 86–89 (ERHY), Lys-97, 113–114 (RR), and 182–183 (GN). The active-site Tele-phosphohistidine intermediate is the His-8. Catalysis depends on Glu-86, which acts as the Proton donor/acceptor.

This sequence belongs to the phosphoglycerate mutase family. BPG-dependent PGAM subfamily. Homodimer.

It catalyses the reaction (2R)-2-phosphoglycerate = (2R)-3-phosphoglycerate. It functions in the pathway carbohydrate degradation; glycolysis; pyruvate from D-glyceraldehyde 3-phosphate: step 3/5. Its function is as follows. Catalyzes the interconversion of 2-phosphoglycerate and 3-phosphoglycerate. The sequence is that of 2,3-bisphosphoglycerate-dependent phosphoglycerate mutase from Mannheimia succiniciproducens (strain KCTC 0769BP / MBEL55E).